The primary structure comprises 127 residues: Ribonuclease P protein component 1 (127 aa).

The protein belongs to the eukaryotic/archaeal RNase P protein component 1 family. As to quaternary structure, consists of a catalytic RNA component and at least 4-5 protein subunits.

Its subcellular location is the cytoplasm. The enzyme catalyses Endonucleolytic cleavage of RNA, removing 5'-extranucleotides from tRNA precursor.. In terms of biological role, part of ribonuclease P, a protein complex that generates mature tRNA molecules by cleaving their 5'-ends. In Pyrococcus abyssi (strain GE5 / Orsay), this protein is Ribonuclease P protein component 1.